A 130-amino-acid chain; its full sequence is Large ribosomal subunit protein bL19 (130 aa).

The protein belongs to the bacterial ribosomal protein bL19 family.

Its function is as follows. This protein is located at the 30S-50S ribosomal subunit interface and may play a role in the structure and function of the aminoacyl-tRNA binding site. The chain is Large ribosomal subunit protein bL19 from Gluconobacter oxydans (strain 621H) (Gluconobacter suboxydans).